A 254-amino-acid polypeptide reads, in one-letter code: Small ribosomal subunit protein uS2 (254 aa).

The protein belongs to the universal ribosomal protein uS2 family.

The protein is Small ribosomal subunit protein uS2 of Legionella pneumophila (strain Corby).